Consider the following 837-residue polypeptide: MSLSHLYRDGEGRIDDDDDERENFEITDWDLQNEFNPNRQRHWQTKEEATYGVWAERDSDDERPSFGGKRARDYSAPVNFISAGLKKGAAEEAELEDSDDEEKPVKQDDFPKDFGPRKLKTGGNFKPSQKGFAGGTKSFMDFGSWERHTKGIGQKLLQKMGYVPGRGLGKNAQGIINPIEAKQRKGKGAVGAYGSERTTQSMQDFPVVDSEEEAEEEFQKELSQWRKDPSGSKKKPKYSYKTVEELKAKGRISKKLTAPQKELSQVKVIDMTGREQKVYYSYSQISHKHNVPDDGLPLQSQQLPQSGKEAKAPGFALPELEHNLQLLIDLTEQEIIQNDRQLQYERDMVVNLFHELEKMTEVLDHEERVISNLSKVLEMVEECERRMQPDCSNPLTLDECARIFETLQDKYYEEYRMSDRVDLAVAIVYPLMKEYFKEWDPLRDCTYGTEIISKWKSLLENDQLLSHGGQDLSADAFHRLIWEVWMPFVRNIVTQWQPRNCDPMVDFLDSWVHIIPVWILDNILDQLIFPKLQKEVENWNPLTDTVPIHSWIHPWLPLMQARLEPLYSPIRSKLSSALQKWHPSDSSAKLILQPWKDVFTPGSWEAFMVKNIVPKLGMCLGELVINPHQQHMDAFYWVIDWEGMISVSSLVGLLEKHFFPKWLQVLCSWLSNSPNYEEITKWYLGWKSMFSDQVLAHPSVKDKFNEALDIMNRAVSSNVGAYMQPGARENIAYLTHTERRKDFQYEAMQERREAENMAQRGIGVAASSVPMNFKDLIETKAEEHNIVFMPVIGKRHEGKQLYTFGRIVIYIDRGVVFVQGEKTWVPTSLQSLIDMAK.

Composition is skewed to basic and acidic residues over residues 1–13 (MSLS…GEGR) and 53–64 (VWAERDSDDERP). Disordered stretches follow at residues 1–21 (MSLS…DDER), 53–72 (VWAE…KRAR), and 85–133 (LKKG…KGFA). A required for interaction with DHX15 region spans residues 1–50 (MSLSHLYRDGEGRIDDDDDERENFEITDWDLQNEFNPNRQRHWQTKEEAT). Phosphoserine is present on residues serine 2, serine 59, and serine 98. A compositionally biased stretch (acidic residues) spans 91–102 (EEAELEDSDDEE). The segment covering 103-116 (KPVKQDDFPKDFGP) has biased composition (basic and acidic residues). Phosphoserine is present on serine 144. Residues 149-195 (TKGIGQKLLQKMGYVPGRGLGKNAQGIINPIEAKQRKGKGAVGAYGS) form the G-patch domain. The segment at 179-236 (IEAKQRKGKGAVGAYGSERTTQSMQDFPVVDSEEEAEEEFQKELSQWRKDPSGSKKKP) is disordered. Residue serine 210 is modified to Phosphoserine. Basic and acidic residues predominate over residues 217–231 (EFQKELSQWRKDPSG). The Nuclear localization signal signature appears at 700 to 705 (VKDKFN). The required for nuclear speckle localization stretch occupies residues 710-734 (IMNRAVSSNVGAYMQPGARENIAYL).

Belongs to the TFP11/STIP family. As to quaternary structure, identified in the spliceosome C complex. Found in the Intron Large (IL) complex, a post-mRNA release spliceosomal complex containing the excised intron, U2, U5 and U6 snRNPs, and splicing factors. Interacts with TUFT1. Interacts with DHX15; indicative for a recruitment of DHX15 to the IL complex. Interacts with GCFC2.

It localises to the cytoplasm. It is found in the nucleus. Functionally, involved in pre-mRNA splicing, specifically in spliceosome disassembly during late-stage splicing events. Intron turnover seems to proceed through reactions in two lariat-intron associated complexes termed Intron Large (IL) and Intron Small (IS). In cooperation with DHX15 seems to mediate the transition of the U2, U5 and U6 snRNP-containing IL complex to the snRNP-free IS complex leading to efficient debranching and turnover of excised introns. May play a role in the differentiation of ameloblasts and odontoblasts or in the forming of the enamel extracellular matrix. This Pan troglodytes (Chimpanzee) protein is Tuftelin-interacting protein 11 (TFIP11).